The chain runs to 330 residues: Transcription factor TGA2 (330 aa).

Positions 1–48 are disordered; it reads MADTSPRTDVSTDDDTDHPDLGSEGALVNTAASDSSDRSKGKMDQKTL. Basic and acidic residues predominate over residues 35-47; sequence SSDRSKGKMDQKT. In terms of domain architecture, bZIP spans 44-107; sequence DQKTLRRLAQ…GTGDQAHSTG (64 aa). Coiled coils occupy residues 45–142 and 217–244; these read QKTL…HAGD and INNL…SLAD. A basic motif region spans residues 46-66; that stretch reads KTLRRLAQNREAARKSRLRKK. The segment at 72 to 86 is leucine-zipper; sequence LENSRLKLTQLEQEL. The 217-residue stretch at 111–327 folds into the DOG1 domain; it reads ALAFDAEHSR…RALSSLWLAR (217 aa).

It belongs to the bZIP family. In terms of assembly, binds DNA as a dimer. Interacts with NPR1, NPR3 and NPR4. Interacts with GRXC7/ROXY1 and GRXC9/GRX480. Expressed in the whole plant.

The protein resides in the nucleus. Transcriptional activator that binds specifically to the DNA sequence 5'-TGACG-3'. Recognizes ocs elements like the as-1 motif of the cauliflower mosaic virus 35S promoter. Binding to the as-1-like cis elements mediate auxin- and salicylic acid-inducible transcription. Required to induce the systemic acquired resistance (SAR) via the regulation of pathogenesis-related genes expression. Binding to the as-1 element of PR-1 promoter is salicylic acid-inducible and mediated by NPR1. Could also bind to the C-boxes (5'-ATGACGTCAT-3') with high affinity. This Arabidopsis thaliana (Mouse-ear cress) protein is Transcription factor TGA2 (TGA2).